Here is a 109-residue protein sequence, read N- to C-terminus: Large ribosomal subunit protein uL22 (109 aa).

Belongs to the universal ribosomal protein uL22 family. Part of the 50S ribosomal subunit.

Functionally, this protein binds specifically to 23S rRNA; its binding is stimulated by other ribosomal proteins, e.g. L4, L17, and L20. It is important during the early stages of 50S assembly. It makes multiple contacts with different domains of the 23S rRNA in the assembled 50S subunit and ribosome. In terms of biological role, the globular domain of the protein is located near the polypeptide exit tunnel on the outside of the subunit, while an extended beta-hairpin is found that lines the wall of the exit tunnel in the center of the 70S ribosome. This chain is Large ribosomal subunit protein uL22, found in Herminiimonas arsenicoxydans.